We begin with the raw amino-acid sequence, 394 residues long: Flavohemoprotein (394 aa).

One can recognise a Globin domain in the interval 1 to 138 (MLTQEHINII…LAQVFIDREG (138 aa)). Position 85 (His-85) interacts with heme b. Active-site charge relay system residues include Tyr-95 and Glu-137. Positions 149–394 (GGWRDGRTFV…VFGPHAQLAA (246 aa)) are reductase. The 111-residue stretch at 152-262 (RDGRTFVVRE…YAPAGDFFYV (111 aa)) folds into the FAD-binding FR-type domain. Residues Tyr-190 and 206–209 (RQYS) contribute to the FAD site. Residue 274–279 (GVGATP) participates in NADP(+) binding. 385–388 (VFGP) lines the FAD pocket.

It belongs to the globin family. Two-domain flavohemoproteins subfamily. In the C-terminal section; belongs to the flavoprotein pyridine nucleotide cytochrome reductase family. The cofactor is heme b. FAD serves as cofactor.

It carries out the reaction 2 nitric oxide + NADPH + 2 O2 = 2 nitrate + NADP(+) + H(+). The catalysed reaction is 2 nitric oxide + NADH + 2 O2 = 2 nitrate + NAD(+) + H(+). Its function is as follows. Is involved in NO detoxification in an aerobic process, termed nitric oxide dioxygenase (NOD) reaction that utilizes O(2) and NAD(P)H to convert NO to nitrate, which protects the bacterium from various noxious nitrogen compounds. Therefore, plays a central role in the inducible response to nitrosative stress. The polypeptide is Flavohemoprotein (hmp) (Vibrio cholerae serotype O1 (strain ATCC 39315 / El Tor Inaba N16961)).